The primary structure comprises 387 residues: Arrestin-C (387 aa).

Belongs to the arrestin family. Retina and pineal gland.

In terms of biological role, may play a role in an as yet undefined retina-specific signal transduction. Could bind to photoactivated-phosphorylated red/green opsins. The polypeptide is Arrestin-C (arr3) (Xenopus laevis (African clawed frog)).